A 1598-amino-acid chain; its full sequence is Pentafunctional AROM polypeptide (1598 aa).

The 3-dehydroquinate synthase stretch occupies residues 1–384 (MGVPTKISIL…YEPRASTVSN (384 aa)). NAD(+) is bound by residues 44 to 46 (DTN), 81 to 84 (ESSK), 114 to 116 (GGV), and Asp-119. Arg-130 provides a ligand contact to 7-phospho-2-dehydro-3-deoxy-D-arabino-heptonate. NAD(+) is bound at residue 139–140 (TT). 2 residues coordinate 7-phospho-2-dehydro-3-deoxy-D-arabino-heptonate: Asp-146 and Lys-152. NAD(+) is bound at residue Lys-161. Asn-162 serves as a coordination point for 7-phospho-2-dehydro-3-deoxy-D-arabino-heptonate. NAD(+) is bound by residues 179-182 (FLNT) and Asn-190. Glu-194 serves as a coordination point for Zn(2+). Residues 194 to 197 (EVIK) and Lys-250 contribute to the 7-phospho-2-dehydro-3-deoxy-D-arabino-heptonate site. The Proton acceptor; for 3-dehydroquinate synthase activity role is filled by Glu-260. 7-phospho-2-dehydro-3-deoxy-D-arabino-heptonate is bound by residues 264–268 (RNLLN) and His-271. Residue His-271 participates in Zn(2+) binding. Catalysis depends on His-275, which acts as the Proton acceptor; for 3-dehydroquinate synthase activity. The 7-phospho-2-dehydro-3-deoxy-D-arabino-heptonate site is built by His-287 and Lys-356. Zn(2+) is bound at residue His-287. An EPSP synthase region spans residues 397–842 (VYPGFPKSLN…WNTLAQTFKV (446 aa)). Cys-824 (for EPSP synthase activity) is an active-site residue. Residues 867–1059 (AASIFIIGMR…RRKENTFFVS (193 aa)) form a shikimate kinase region. 874–881 (GMRGAGKT) lines the ATP pocket. The tract at residues 1060 to 1280 (LTFPDLTPAS…AAPGQLSARE (221 aa)) is 3-dehydroquinase. Residue His-1183 is the Proton acceptor; for 3-dehydroquinate dehydratase activity of the active site. Lys-1211 serves as the catalytic Schiff-base intermediate with substrate; for 3-dehydroquinate dehydratase activity. The interval 1293 to 1598 (AKKFAVIGKP…GVSSSDDTIS (306 aa)) is shikimate dehydrogenase.

This sequence in the N-terminal section; belongs to the sugar phosphate cyclases superfamily. Dehydroquinate synthase family. The protein in the 2nd section; belongs to the EPSP synthase family. It in the 3rd section; belongs to the shikimate kinase family. In the 4th section; belongs to the type-I 3-dehydroquinase family. This sequence in the C-terminal section; belongs to the shikimate dehydrogenase family. Homodimer. It depends on Zn(2+) as a cofactor.

It is found in the cytoplasm. It carries out the reaction 7-phospho-2-dehydro-3-deoxy-D-arabino-heptonate = 3-dehydroquinate + phosphate. The catalysed reaction is 3-dehydroquinate = 3-dehydroshikimate + H2O. The enzyme catalyses shikimate + NADP(+) = 3-dehydroshikimate + NADPH + H(+). It catalyses the reaction shikimate + ATP = 3-phosphoshikimate + ADP + H(+). It carries out the reaction 3-phosphoshikimate + phosphoenolpyruvate = 5-O-(1-carboxyvinyl)-3-phosphoshikimate + phosphate. It functions in the pathway metabolic intermediate biosynthesis; chorismate biosynthesis; chorismate from D-erythrose 4-phosphate and phosphoenolpyruvate: step 2/7. Its pathway is metabolic intermediate biosynthesis; chorismate biosynthesis; chorismate from D-erythrose 4-phosphate and phosphoenolpyruvate: step 3/7. It participates in metabolic intermediate biosynthesis; chorismate biosynthesis; chorismate from D-erythrose 4-phosphate and phosphoenolpyruvate: step 4/7. The protein operates within metabolic intermediate biosynthesis; chorismate biosynthesis; chorismate from D-erythrose 4-phosphate and phosphoenolpyruvate: step 5/7. It functions in the pathway metabolic intermediate biosynthesis; chorismate biosynthesis; chorismate from D-erythrose 4-phosphate and phosphoenolpyruvate: step 6/7. Functionally, the AROM polypeptide catalyzes 5 consecutive enzymatic reactions in prechorismate polyaromatic amino acid biosynthesis. This chain is Pentafunctional AROM polypeptide, found in Paracoccidioides brasiliensis (strain Pb18).